The sequence spans 642 residues: Threonine--tRNA ligase (642 aa).

A TGS domain is found at 1 to 61; that stretch reads MPVITLPDGS…DTDAQLAIIT (61 aa). The segment at 243-534 is catalytic; that stretch reads DHRKIGKQLD…LTEEFAGFFP (292 aa). 3 residues coordinate Zn(2+): cysteine 334, histidine 385, and histidine 511.

Belongs to the class-II aminoacyl-tRNA synthetase family. In terms of assembly, homodimer. Zn(2+) is required as a cofactor.

It is found in the cytoplasm. It catalyses the reaction tRNA(Thr) + L-threonine + ATP = L-threonyl-tRNA(Thr) + AMP + diphosphate + H(+). Its function is as follows. Catalyzes the attachment of threonine to tRNA(Thr) in a two-step reaction: L-threonine is first activated by ATP to form Thr-AMP and then transferred to the acceptor end of tRNA(Thr). Also edits incorrectly charged L-seryl-tRNA(Thr). This is Threonine--tRNA ligase from Pectobacterium atrosepticum (strain SCRI 1043 / ATCC BAA-672) (Erwinia carotovora subsp. atroseptica).